The following is a 1422-amino-acid chain: FH1/FH2 domain-containing protein 3 (1422 aa).

A GBD/FH3 domain is found at 18-411 (NSTNFPEPSR…NFGNNSYHSS (394 aa)). Disordered regions lie at residues 323 to 464 (RHED…RRRQ), 521 to 666 (ACLA…GVNG), 687 to 708 (RKSP…QEAE), 754 to 781 (SGDL…VQPK), 821 to 849 (LGHR…PPLL), 1262 to 1305 (QQKQ…SYAE), 1320 to 1357 (SSPS…SPNV), and 1374 to 1410 (TQVP…EEAR). Position 345 is a phosphoserine (Ser-345). Over residues 357–366 (LDRRRSRRHS) the composition is skewed to basic residues. Residues 367–390 (VQSIKSTLSAPTSPCSQSAPSFKP) show a composition bias toward polar residues. Ser-375 carries the post-translational modification Phosphoserine. Residues 410-430 (SSRPSSGSSVPTTPTSSVSPP) are compositionally biased toward low complexity. Over residues 438 to 449 (SSPSGLLTSSFR) the composition is skewed to polar residues. The stretch at 448 to 480 (FRQHQESLAAERERRRQEREERLQRIEREERNK) forms a coiled coil. A compositionally biased stretch (basic and acidic residues) spans 450–464 (QHQESLAAERERRRQ). The span at 521–535 (ACLAPLSHSPSSSDS) shows a compositional bias: low complexity. Positions 536 to 547 (QEALTVSASSPG) are enriched in polar residues. 2 stretches are compositionally biased toward acidic residues: residues 559–569 (PEPESEAEPEA) and 592–603 (ETEVEQALEQEP). Over residues 604–624 (EERASLSEKERQNEGVNERDN) the composition is skewed to basic and acidic residues. Residues 626–635 (SASSVSSSSS) are compositionally biased toward low complexity. A compositionally biased stretch (basic and acidic residues) spans 637–651 (LEREEKEDKLSRDRT). The residue at position 763 (Ser-763) is a Phosphoserine. Thr-775 carries the phosphothreonine modification. Positions 827–849 (PGPPPPPPPTFLGLPPPPPPPLL) are enriched in pro residues. One can recognise an FH1 domain in the interval 827–858 (PGPPPPPPPTFLGLPPPPPPPLLDSIPPPPVP). The region spanning 883–1279 (GQPTFTKKKK…HRERNKTRGK (397 aa)) is the FH2 domain. Positions 1264-1278 (KQKRANHRERNKTRG) are enriched in basic residues. Positions 1359-1391 (DDAADEIMDRIVKSATQVPSQRVVPRERKRSRA) constitute a DAD domain. Residues 1385–1400 (ERKRSRANRKSLRRTL) show a composition bias toward basic residues.

The protein belongs to the formin homology family. Interacts with nestin/NES-based interfilament (IF). Interacts with SQSTM1; isoform 4 threonine phosphorylation disrupts SQSTM1-binding. Post-translationally, phosphorylated on Thr-1474 and Thr-1476 by CK2. In terms of tissue distribution, expressed in the heart, kidney and brain. May be down-regulated in various types of heart diseases, including idiopathic dilated, ventricular dilated, familial dilated and perinatal dilated cardiomyopathies, as well as ischemic heart disease (at protein level).

It is found in the cytoplasm. Its subcellular location is the cytoskeleton. It localises to the myofibril. The protein resides in the sarcomere. The protein localises to the z line. Functionally, actin-organizing protein that may cause stress fiber formation together with cell elongation. Isoform 4 may play a role in actin filament polymerization in cardiomyocytes. The chain is FH1/FH2 domain-containing protein 3 (FHOD3) from Homo sapiens (Human).